Here is a 261-residue protein sequence, read N- to C-terminus: Phosphatidylglycerol--prolipoprotein diacylglyceryl transferase (261 aa).

The next 4 membrane-spanning stretches (helical) occupy residues 17 to 37 (FGIH…LWLG), 60 to 80 (ALFY…ALFY), 92 to 112 (ILFL…VMVA), and 121 to 141 (GLTF…GLGA). Residue R143 participates in a 1,2-diacyl-sn-glycero-3-phospho-(1'-sn-glycerol) binding. A run of 3 helical transmembrane segments spans residues 175 to 195 (PSQL…LWWY), 203 to 223 (GSVS…VEFT), and 237 to 257 (LSMG…LLIV).

This sequence belongs to the Lgt family.

The protein resides in the cell inner membrane. The catalysed reaction is L-cysteinyl-[prolipoprotein] + a 1,2-diacyl-sn-glycero-3-phospho-(1'-sn-glycerol) = an S-1,2-diacyl-sn-glyceryl-L-cysteinyl-[prolipoprotein] + sn-glycerol 1-phosphate + H(+). The protein operates within protein modification; lipoprotein biosynthesis (diacylglyceryl transfer). Catalyzes the transfer of the diacylglyceryl group from phosphatidylglycerol to the sulfhydryl group of the N-terminal cysteine of a prolipoprotein, the first step in the formation of mature lipoproteins. The protein is Phosphatidylglycerol--prolipoprotein diacylglyceryl transferase of Methylobacillus flagellatus (strain ATCC 51484 / DSM 6875 / VKM B-1610 / KT).